We begin with the raw amino-acid sequence, 107 residues long: MRGGMGNMQKMMKQMQKMQKDMQKAQEELAEKVLEGTAGGGMVTVKVNGQKEVIDVIIKEEVVDPEDVEMLQDLVLAATNDALKKVDEVTNETMGKFTKGMNMPGLF.

The interval 1-27 (MRGGMGNMQKMMKQMQKMQKDMQKAQE) is disordered. Residues 8–17 (MQKMMKQMQK) show a composition bias toward low complexity. The span at 18–27 (MQKDMQKAQE) shows a compositional bias: basic and acidic residues.

Belongs to the YbaB/EbfC family. Homodimer.

It is found in the cytoplasm. Its subcellular location is the nucleoid. Binds to DNA and alters its conformation. May be involved in regulation of gene expression, nucleoid organization and DNA protection. This is Nucleoid-associated protein BLi00029/BL02358 from Bacillus licheniformis (strain ATCC 14580 / DSM 13 / JCM 2505 / CCUG 7422 / NBRC 12200 / NCIMB 9375 / NCTC 10341 / NRRL NRS-1264 / Gibson 46).